Reading from the N-terminus, the 63-residue chain is Megourin-3 (63 aa).

As to quaternary structure, monomer. In terms of processing, contains four disulfide bonds.

It is found in the secreted. Functionally, has antimicrobial activity against Gram-positive bacteria and fungi. In Megoura viciae (Vetch aphid), this protein is Megourin-3.